Here is a 522-residue protein sequence, read N- to C-terminus: Kelch domain-containing protein 4 (522 aa).

The span at 1–10 (MGKKGKKEKK) shows a compositional bias: basic residues. Residues 1-33 (MGKKGKKEKKGRGAEKTAAKMEKKVSKRSRKEE) are disordered. Basic and acidic residues predominate over residues 11-24 (GRGAEKTAAKMEKK). Kelch repeat units lie at residues 77-129 (ELIL…VVPQ), 133-187 (QLWV…AWKR), 188-241 (QLIL…VTPQ), 243-289 (GIII…MNPS), and 308-361 (QTLF…RRGR). Disordered regions lie at residues 346–378 (QLKG…GAGT), 402–432 (LAAP…PCPR), and 481–522 (DPET…GAED). Residues Ser-413 and Ser-418 each carry the phosphoserine modification. Residues 443 to 494 (VLYVYGGMFEAGDRQVTLSDLHCLDLHRMEAWKALVEMDPETQEWLEETDSE) form a Kelch 6 repeat.

This chain is Kelch domain-containing protein 4 (KLHDC4), found in Pongo abelii (Sumatran orangutan).